The sequence spans 535 residues: Methylmalonate-semialdehyde/malonate-semialdehyde dehydrogenase [acylating], mitochondrial (535 aa).

Residues 1-32 (MAAAVAAAAAMRSRILQVSSKVNATWYPASSF) constitute a mitochondrion transit peptide. N6-acetyllysine; alternate occurs at positions 47, 52, 55, and 76. N6-succinyllysine; alternate occurs at positions 47, 52, 55, and 76. Residue K87 is modified to N6-acetyllysine. An N6-acetyllysine; alternate mark is found at K117 and K129. K117 and K129 each carry N6-succinyllysine; alternate. NAD(+)-binding residues include A183, F185, K209, E212, R213, and S262. The residue at position 262 (S262) is a Phosphoserine. At K298 the chain carries N6-acetyllysine. C317 (nucleophile) is an active-site residue. 2 positions are modified to N6-acetyllysine: K330 and K331. K364 and K376 each carry N6-acetyllysine; alternate. Residues K364 and K376 each carry the N6-succinyllysine; alternate modification. Position 380 is a phosphoserine (S380). K391 is subject to N6-succinyllysine. An NAD(+)-binding site is contributed by E417. An N6-acetyllysine modification is found at K500. N6-succinyllysine is present on K517.

Belongs to the aldehyde dehydrogenase family. As to quaternary structure, homotetramer. Post-translationally, acetylation of Lys-55; Lys-117 and Lys-331 is observed in liver mitochondria from fasted mice but not from fed mice.

It localises to the mitochondrion. It catalyses the reaction 3-oxopropanoate + NAD(+) + CoA + H2O = hydrogencarbonate + acetyl-CoA + NADH + H(+). It carries out the reaction 2-methyl-3-oxopropanoate + NAD(+) + CoA + H2O = propanoyl-CoA + hydrogencarbonate + NADH + H(+). The catalysed reaction is (R)-2-methyl-3-oxopropanoate + NAD(+) + CoA + H2O = propanoyl-CoA + hydrogencarbonate + NADH + H(+). The enzyme catalyses (S)-2-methyl-3-oxopropanoate + NAD(+) + CoA + H2O = propanoyl-CoA + hydrogencarbonate + NADH + H(+). Its function is as follows. Malonate and methylmalonate semialdehyde dehydrogenase involved in the catabolism of valine, thymine, and compounds catabolized by way of beta-alanine, including uracil and cytidine. The protein is Methylmalonate-semialdehyde/malonate-semialdehyde dehydrogenase [acylating], mitochondrial of Mus musculus (Mouse).